A 725-amino-acid chain; its full sequence is Catalase-peroxidase (725 aa).

Positions 98 to 226 (WHMAGSYRTS…LAAVQMGLIY (129 aa)) form a cross-link, tryptophyl-tyrosyl-methioninium (Trp-Tyr) (with M-252). The active-site Proton acceptor is the histidine 99. Residues 226–252 (YVNPEGVNGKSDPQATAYQMRETFARM) constitute a cross-link (tryptophyl-tyrosyl-methioninium (Tyr-Met) (with W-98)). Histidine 267 contacts heme b.

Belongs to the peroxidase family. Peroxidase/catalase subfamily. In terms of assembly, homodimer or homotetramer. Heme b is required as a cofactor. Formation of the three residue Trp-Tyr-Met cross-link is important for the catalase, but not the peroxidase activity of the enzyme.

The catalysed reaction is H2O2 + AH2 = A + 2 H2O. The enzyme catalyses 2 H2O2 = O2 + 2 H2O. Its function is as follows. Bifunctional enzyme with both catalase and broad-spectrum peroxidase activity. This is Catalase-peroxidase from Paracoccus denitrificans (strain Pd 1222).